Reading from the N-terminus, the 379-residue chain is dTDP-3-amino-3,4,6-trideoxy-alpha-D-glucose transaminase (379 aa).

Pyridoxal 5'-phosphate-binding positions include G67, Q167, 188–193, Y221, Y227, 235–237, and Y318; these read SFYPGK and NSR. K193 is subject to N6-(pyridoxal phosphate)lysine.

It belongs to the degT/dnrJ/eryC1 family. As to quaternary structure, homodimer. Pyridoxal 5'-phosphate is required as a cofactor.

The enzyme catalyses dTDP-3-amino-3,4,6-trideoxy-alpha-D-glucose + 2-oxoglutarate = dTDP-3-dehydro-4,6-dideoxy-alpha-D-glucose + L-glutamate. Its pathway is antibiotic biosynthesis. Involved in the biosynthesis of dTDP-alpha-D-desosamine, a sugar found in several bacterial macrolide antibiotics. Catalyzes the reversible transfer of the amino group from L-glutamate to the C-3 position of dTDP-3-keto-4,6-deoxyglucose to yield dTDP-3-amino-3,4,6-trideoxyglucose. This chain is dTDP-3-amino-3,4,6-trideoxy-alpha-D-glucose transaminase, found in Streptomyces venezuelae.